A 287-amino-acid polypeptide reads, in one-letter code: L-cysteine S-thiosulfotransferase subunit SoxA (287 aa).

Residues 1-26 form the signal peptide; it reads MKTMTGRLVAAALVCGGAFSGAAVSA. The region spanning 74–168 is the Cytochrome c domain; that stretch reads DDFENSGMVF…AMVALIASVS (95 aa). 7 residues coordinate heme c: cysteine 102, cysteine 105, histidine 106, cysteine 140, cysteine 203, cysteine 206, and histidine 207. Arginine 244 is a binding site for substrate. Cysteine 248 lines the heme c pocket. Cysteine 248 functions as the Cysteine persulfide intermediate in the catalytic mechanism.

This sequence belongs to the SoxA family. Heterodimer of SoxA and SoxX. The cofactor is heme c. Post-translationally, cysteine persulfide at Cys-248.

It is found in the periplasm. It catalyses the reaction L-cysteinyl-[SoxY protein] + thiosulfate + 2 Fe(III)-[cytochrome c] = S-sulfosulfanyl-L-cysteinyl-[SoxY protein] + 2 Fe(II)-[cytochrome c] + 2 H(+). The catalysed reaction is S-sulfanyl-L-cysteinyl-[SoxY protein] + thiosulfate + 2 Fe(III)-[cytochrome c] = S-(2-sulfodisulfanyl)-L-cysteinyl-[SoxY protein] + 2 Fe(II)-[cytochrome c] + 2 H(+). Its function is as follows. C-type diheme cytochrome, which is part of the SoxAX cytochrome complex involved in sulfur oxidation. The SoxAX complex catalyzes the formation of a heterodisulfide bond between the conserved cysteine residue on a sulfur carrier SoxYZ complex subunit SoxY and thiosulfate or other inorganic sulfur substrates. This leads to the liberation of two electrons, which may be transferred from the SoxAX complex to another cytochrome c and which then may be used for reductive CO(2) fixation. In Rhodovulum sulfidophilum (Rhodobacter sulfidophilus), this protein is L-cysteine S-thiosulfotransferase subunit SoxA.